A 2000-amino-acid polypeptide reads, in one-letter code: Myosin-14 (2000 aa).

A2 carries the N-acetylalanine modification. At T33 the chain carries Phosphothreonine. A Myosin N-terminal SH3-like domain is found at 47–97; the sequence is TARRMVWVPSELHGFEAAALRDEGEEEAEVELAESGRRLRLPRDQIQRMNP. S56 is subject to Phosphoserine. A Myosin motor domain is found at 101–804; that stretch reads SKAEDMAELT…VLAQLEEERD (704 aa). ATP is bound at residue 194-201; sequence GESGAGKT. The segment at 682 to 704 is actin-binding; it reads LSRLMATLSNTNPSFVRCIVPNH. The 30-residue stretch at 807–836 folds into the IQ domain; that stretch reads VTDIIVSFQAAARGYLARRAFQRRQQQQSA. Residues 866–1951 are a coiled coil; the sequence is LQVTRQDEVL…VTTLRNRLRR (1086 aa). Position 925 is a phosphoserine (S925). The segment at 1173–1197 is disordered; the sequence is RGELEDTLDSTNAQQELRSKREQEV. Phosphothreonine is present on T1198. Residues S1249 and S1280 each carry the phosphoserine modification. 5 disordered regions span residues 1260–1311, 1597–1629, 1720–1751, 1910–1942, and 1967–2000; these read ELSS…AELE, HERD…RDEE, SDRA…TLEE, AEEE…NREV, and LEEG…ATPQ. Basic and acidic residues predominate over residues 1290-1304; sequence SDSERARSEAAEKLQ. The span at 1720 to 1732 shows a compositional bias: basic and acidic residues; it reads SDRARRQAQQDRD. Positions 1971–1980 are enriched in acidic residues; it reads VASDEEEAEG. Residues S1973 and S1985 each carry the phosphoserine modification. Low complexity predominate over residues 1981–1991; it reads AEPGSAPGQEP. Position 1998 is a phosphothreonine (T1998).

It belongs to the TRAFAC class myosin-kinesin ATPase superfamily. Myosin family. Myosin is a hexameric protein that consists of 2 heavy chain subunits (MHC), 2 alkali light chain subunits (MLC) and 2 regulatory light chain subunits (MLC-2). In terms of tissue distribution, highest levels in lung, kidney, brain and colon, very low levels in liver and bladder and no expression in spleen or seminal vesicle (at protein level). Isoform 1 is expressed in liver, kidney and testis with low levels in skeletal muscle and heart. Isoform 1 and isoform 2 are expressed in brain and lung. Isoform 2 is the main isoform expressed in skeletal muscle and heart. Isoform 3 is limited to brain stem, cerebellum and spinal cord.

Functionally, cellular myosin that appears to play a role in cytokinesis, cell shape, and specialized functions such as secretion and capping. This chain is Myosin-14 (Myh14), found in Mus musculus (Mouse).